The chain runs to 78 residues: Small ribosomal subunit protein bS18 (78 aa).

This sequence belongs to the bacterial ribosomal protein bS18 family. In terms of assembly, part of the 30S ribosomal subunit. Forms a tight heterodimer with protein bS6.

Its function is as follows. Binds as a heterodimer with protein bS6 to the central domain of the 16S rRNA, where it helps stabilize the platform of the 30S subunit. The polypeptide is Small ribosomal subunit protein bS18 (Kineococcus radiotolerans (strain ATCC BAA-149 / DSM 14245 / SRS30216)).